A 319-amino-acid chain; its full sequence is ATP-dependent 6-phosphofructokinase 1 (319 aa).

Glycine 11 provides a ligand contact to ATP. 21–25 provides a ligand contact to ADP; it reads RAVTR. Residues 72–73 and 102–105 contribute to the ATP site; these read RC and GDGS. A Mg(2+)-binding site is contributed by aspartate 103. 125–127 contributes to the substrate binding site; that stretch reads TID. The active-site Proton acceptor is aspartate 127. Arginine 154 is a binding site for ADP. Substrate is bound by residues arginine 162 and 169–171; that span reads MGR. Residues 185-187 and 213-215 contribute to the ADP site; these read GAE and KTH. Substrate-binding positions include glutamate 222, arginine 243, and 249–252; that span reads HIQR.

This sequence belongs to the phosphofructokinase type A (PFKA) family. ATP-dependent PFK group I subfamily. Prokaryotic clade 'B1' sub-subfamily. Homotetramer. Mg(2+) is required as a cofactor.

The protein resides in the cytoplasm. It catalyses the reaction beta-D-fructose 6-phosphate + ATP = beta-D-fructose 1,6-bisphosphate + ADP + H(+). Its pathway is carbohydrate degradation; glycolysis; D-glyceraldehyde 3-phosphate and glycerone phosphate from D-glucose: step 3/4. With respect to regulation, allosterically activated by ADP and other diphosphonucleosides, and allosterically inhibited by phosphoenolpyruvate. Its function is as follows. Catalyzes the phosphorylation of D-fructose 6-phosphate to fructose 1,6-bisphosphate by ATP, the first committing step of glycolysis. This chain is ATP-dependent 6-phosphofructokinase 1, found in Clostridium perfringens (strain 13 / Type A).